Here is a 204-residue protein sequence, read N- to C-terminus: MGAYKYIQELWRKKQSDVMRFLLRVRCWQYRQLSALHRAPRPTRPDKARRLGYKAKQGYVIYRIRVRRGGRKRPVPKGATYGKPVHHGVNQLKFARSLQSVAEERAGRHCGALRVLNSYWVGEDSTYKFFEVILIDPFHKAIRRNPDTQWITKPVHKHREMRGLTSAGRKSRGLGKGHKFHHTIGGSRRAAWRRRNTLQLHRYR.

A lipid anchor (N-myristoyl glycine) is attached at glycine 2. Serine 34 carries the phosphoserine modification. A Glycyl lysine isopeptide (Lys-Gly) (interchain with G-Cter in SUMO2) cross-link involves residue lysine 83. Serine 97 and serine 100 each carry phosphoserine. The tract at residues 165–186 is disordered; it reads TSAGRKSRGLGKGHKFHHTIGG. Residues 169-182 are compositionally biased toward basic residues; that stretch reads RKSRGLGKGHKFHH.

This sequence belongs to the eukaryotic ribosomal protein eL15 family. Component of the large ribosomal subunit. Interacts with IFIT1 (via TPR repeats 1-4).

Its subcellular location is the cytoplasm. In terms of biological role, component of the large ribosomal subunit. The ribosome is a large ribonucleoprotein complex responsible for the synthesis of proteins in the cell. The chain is Large ribosomal subunit protein eL15 (RPL15) from Bos taurus (Bovine).